The sequence spans 186 residues: Interferon beta-3 (186 aa).

A signal peptide spans M1–S21. The cysteines at positions 52 and 161 are disulfide-linked. N-linked (GlcNAc...) asparagine glycans are attached at residues N131 and N173.

This sequence belongs to the alpha/beta interferon family. As to quaternary structure, monomer.

Its subcellular location is the secreted. Has antiviral, antibacterial and anticancer activities. This is Interferon beta-3 (IFNB3) from Bos taurus (Bovine).